Here is a 116-residue protein sequence, read N- to C-terminus: Protein Rev (116 aa).

Phosphoserine; by host CK2 is present on residues Ser-5 and Ser-8. Positions 18–26 (LIKFLYQSN) are homomultimerization. Residues 25–49 (SNPPPSLEGTRQARRNRRRRWRERQ) are disordered. The Nuclear localization signal and RNA-binding (RRE) signature appears at 34 to 50 (TRQARRNRRRRWRERQR). A compositionally biased stretch (basic residues) spans 36-47 (QARRNRRRRWRE). The short motif at 73-84 (LPLPPLEKLTLD) is the Nuclear export signal and binding to XPO1 element. Ser-92 and Ser-99 each carry phosphoserine; by host. The interval 92–116 (SGTQGVGSPQILVESPAILEPGTKE) is disordered.

The protein belongs to the HIV-1 REV protein family. In terms of assembly, homomultimer; when bound to the RRE. Multimeric assembly is essential for activity and may involve XPO1. Binds to human KPNB1, XPO1, TNPO1, RANBP5 and IPO7. Interacts with the viral Integrase. Interacts with human KHDRBS1. Interacts with human NAP1; this interaction decreases Rev multimerization and stimulates its activity. Interacts with human DEAD-box helicases DDX3 and DDX24; these interactions may serve for viral RNA export to the cytoplasm and packaging, respectively. Interacts with human PSIP1; this interaction may inhibit HIV-1 DNA integration by promoting dissociation of the Integrase-LEDGF/p75 complex. Post-translationally, asymmetrically arginine dimethylated at one site by host PRMT6. Methylation impairs the RNA-binding activity and export of viral RNA from the nucleus to the cytoplasm. In terms of processing, phosphorylated by protein kinase CK2. Presence of, and maybe binding to the N-terminus of the regulatory beta subunit of CK2 is necessary for CK2-mediated Rev's phosphorylation.

It is found in the host nucleus. Its subcellular location is the host nucleolus. It localises to the host cytoplasm. In terms of biological role, escorts unspliced or incompletely spliced viral pre-mRNAs (late transcripts) out of the nucleus of infected cells. These pre-mRNAs carry a recognition sequence called Rev responsive element (RRE) located in the env gene, that is not present in fully spliced viral mRNAs (early transcripts). This function is essential since most viral proteins are translated from unspliced or partially spliced pre-mRNAs which cannot exit the nucleus by the pathway used by fully processed cellular mRNAs. Rev itself is translated from a fully spliced mRNA that readily exits the nucleus. Rev's nuclear localization signal (NLS) binds directly to KPNB1/Importin beta-1 without previous binding to KPNA1/Importin alpha-1. KPNB1 binds to the GDP bound form of RAN (Ran-GDP) and targets Rev to the nucleus. In the nucleus, the conversion from Ran-GDP to Ran-GTP dissociates Rev from KPNB1 and allows Rev's binding to the RRE in viral pre-mRNAs. Rev multimerization on the RRE via cooperative assembly exposes its nuclear export signal (NES) to the surface. Rev can then form a complex with XPO1/CRM1 and Ran-GTP, leading to nuclear export of the complex. Conversion from Ran-GTP to Ran-GDP mediates dissociation of the Rev/RRE/XPO1/RAN complex, so that Rev can return to the nucleus for a subsequent round of export. Beside KPNB1, also seems to interact with TNPO1/Transportin-1, RANBP5/IPO5 and IPO7/RANBP7 for nuclear import. The nucleoporin-like HRB/RIP is an essential cofactor that probably indirectly interacts with Rev to release HIV RNAs from the perinuclear region to the cytoplasm. This chain is Protein Rev, found in Human immunodeficiency virus type 1 group M subtype B (strain 89.6) (HIV-1).